The following is a 201-amino-acid chain: MLLDGGILSTSVLGQRVAGVDEVGRGPLAGPVIAGAVILDPECPISGVKDSKQLTAPARERLAALIQAQAVAWALGRAEAAEIDQFNILQASLLAMERAISALSVVPDLVLVDGKHCPPTVCPVRAIVKGDQQIMAIGAASIVAKVARDAEMIAFEESYPGYGFGIHKGYPTRAHLAALKALGPCSIHRRSFRPVRRFLEA.

One can recognise an RNase H type-2 domain in the interval 15 to 201 (QRVAGVDEVG…FRPVRRFLEA (187 aa)). Residues aspartate 21, glutamate 22, and aspartate 113 each contribute to the a divalent metal cation site.

It belongs to the RNase HII family. Mn(2+) is required as a cofactor. Mg(2+) serves as cofactor.

It is found in the cytoplasm. The catalysed reaction is Endonucleolytic cleavage to 5'-phosphomonoester.. Endonuclease that specifically degrades the RNA of RNA-DNA hybrids. This Nitrosococcus oceani (strain ATCC 19707 / BCRC 17464 / JCM 30415 / NCIMB 11848 / C-107) protein is Ribonuclease HII.